Reading from the N-terminus, the 208-residue chain is RNA-binding protein KhpB (208 aa).

The segment at 5 to 55 is jag_N domain; it reads TAAGRNVDEAVQSGLQELGLTKDKVEITVIEEGNKGFLGIFGKKPAIVKLV. One can recognise a KH domain in the interval 58–135; it reads IDPIQQAKLY…GQYKNVTVDA (78 aa). Positions 140 to 208 constitute an R3H domain; sequence LKRKETLSQL…NRHLVISHKR (69 aa).

The protein belongs to the KhpB RNA-binding protein family. In terms of assembly, forms a complex with KhpA.

It localises to the cytoplasm. In terms of biological role, a probable RNA chaperone. Forms a complex with KhpA which binds to cellular RNA and controls its expression. Plays a role in peptidoglycan (PG) homeostasis and cell length regulation. This is RNA-binding protein KhpB from Bacillus subtilis (strain 168).